The primary structure comprises 356 residues: Peritrophin-44 (356 aa).

A signal peptide spans 1–23 (MKELQITTGCLLLMVAAIGKTSA). Chitin-binding type-2 domains lie at 28–85 (SETC…KCIS), 88–146 (KNAC…ECTA), 147–201 (DSIC…PCLA), 220–283 (NFVC…PCTF), and 286–355 (CGNL…YKLC). C62 and C75 are disulfide-bonded. N-linked (GlcNAc...) asparagine glycosylation is present at N114. Intrachain disulfides connect C122-C135, C181-C193, and C262-C273. Residue N309 is glycosylated (N-linked (GlcNAc...) asparagine).

In terms of processing, glycosylated. As to expression, larval peritrophic membrane.

Functionally, may have roles in the maintenance of peritrophic membrane structure and in the determination of the porosity of the peritrophic membrane. May bind chitin or related oligosaccharide structures. The polypeptide is Peritrophin-44 (Lucilia cuprina (Green bottle fly)).